The primary structure comprises 117 residues: uncharacterized protein (117 aa).

This is an uncharacterized protein from Acidianus convivator (ABV).